A 365-amino-acid chain; its full sequence is Histidinol-phosphate aminotransferase (365 aa).

The residue at position 220 (K220) is an N6-(pyridoxal phosphate)lysine.

This sequence belongs to the class-II pyridoxal-phosphate-dependent aminotransferase family. Histidinol-phosphate aminotransferase subfamily. As to quaternary structure, homodimer. Requires pyridoxal 5'-phosphate as cofactor.

It catalyses the reaction L-histidinol phosphate + 2-oxoglutarate = 3-(imidazol-4-yl)-2-oxopropyl phosphate + L-glutamate. It functions in the pathway amino-acid biosynthesis; L-histidine biosynthesis; L-histidine from 5-phospho-alpha-D-ribose 1-diphosphate: step 7/9. In Xylella fastidiosa (strain 9a5c), this protein is Histidinol-phosphate aminotransferase.